Consider the following 373-residue polypeptide: MWPLRVYTRKKREGQRLNLTPTPDLGSPAKAEAPPGSKRKGKVHGLSKIAEKAERSRQGGSGSGPFSPRLGVTGEKSLQENRSSEDTQDEKIASLRESVTDDLQVDSSSSNSELVSGLSLHHGMASSLLSYSVTDSYAEYKSFEESFPSPELFRKSDYLDWECPNLEEHMQWKNSTLLDTSKAVAIEKAPQFSNVSAIFSTSSEDYQKCHRKTVMTVADQNVSPKAKCASNSESDNAACEILLAEKTCPSTPEKTKKKKTNSSTPGKKNRGLLTSTPSSETAGFVIDLSSVQKASFEELFPNVSNYVNSNEIVPVSSLQENSSNEFPANASEICCIIRTSPGTRQVKNKGVIVKKKKYSLPKDTPQDIIIKMA.

2 disordered regions span residues 1-91 and 250-276; these read MWPL…QDEK and STPE…LTST. Residues 77 to 91 are compositionally biased toward basic and acidic residues; the sequence is SLQENRSSEDTQDEK. The short motif at 275 to 277 is the POLO box domain (PBD)-binding element; sequence STP. The segment at 332–335 is required for localization to kinetochores; the sequence is EICC.

Interacts with CENPC. Interacts with PLK1; required for recruitment of PLK1 at kinetochores.

Its subcellular location is the chromosome. It is found in the centromere. The protein resides in the kinetochore. Key regulator of kinetochore function during meiosis I: required both for mono-orientation of kinetochores on sister chromosomes and protection of centromeric cohesin from separase-mediated cleavage. Acts by facilitating kinetochore mono-orientation during meiosis I, when kinetochores on sister chromosomes face the same direction and are thus captured and pulled by spindle fibers from the same pole. Also required to prevent cleavage of cohesin at centromeres during meiosis I, possibly by acting as a regulator of the shugoshin-dependent protection pathway. Acts in collaboration with PLK1: required for PLK1 enrichment to kinetochores. Not required during meiosis II or mitosis. This chain is Meiosis-specific kinetochore protein, found in Homo sapiens (Human).